We begin with the raw amino-acid sequence, 430 residues long: Enolase (430 aa).

Gln-167 provides a ligand contact to (2R)-2-phosphoglycerate. Glu-209 serves as the catalytic Proton donor. The Mg(2+) site is built by Asp-246, Glu-289, and Asp-316. 4 residues coordinate (2R)-2-phosphoglycerate: Lys-341, Arg-370, Ser-371, and Lys-392. Lys-341 serves as the catalytic Proton acceptor.

Belongs to the enolase family. As to quaternary structure, component of the RNA degradosome, a multiprotein complex involved in RNA processing and mRNA degradation. Requires Mg(2+) as cofactor.

The protein resides in the cytoplasm. The protein localises to the secreted. It is found in the cell surface. It catalyses the reaction (2R)-2-phosphoglycerate = phosphoenolpyruvate + H2O. It participates in carbohydrate degradation; glycolysis; pyruvate from D-glyceraldehyde 3-phosphate: step 4/5. In terms of biological role, catalyzes the reversible conversion of 2-phosphoglycerate (2-PG) into phosphoenolpyruvate (PEP). It is essential for the degradation of carbohydrates via glycolysis. The sequence is that of Enolase from Idiomarina loihiensis (strain ATCC BAA-735 / DSM 15497 / L2-TR).